The primary structure comprises 324 residues: Acetaldehyde dehydrogenase 1 (324 aa).

NAD(+) is bound at residue 18–21 (SGNI). The active-site Acyl-thioester intermediate is Cys-136. NAD(+) is bound by residues 167-175 (SAGPGTRAN) and Asn-297.

It belongs to the acetaldehyde dehydrogenase family.

It carries out the reaction acetaldehyde + NAD(+) + CoA = acetyl-CoA + NADH + H(+). The sequence is that of Acetaldehyde dehydrogenase 1 from Parafrankia sp. (strain EAN1pec).